The sequence spans 344 residues: Probable pectinesterase 67 (344 aa).

Positions Met1–Ala23 are cleaved as a signal peptide. N-linked (GlcNAc...) asparagine glycosylation is found at Asn43 and Asn151. Gln152 is a substrate binding site. The active-site Nucleophile is the Asp196. Residue Arg256 participates in substrate binding. A glycan (N-linked (GlcNAc...) asparagine) is linked at Asn282.

Belongs to the pectinesterase family. In terms of tissue distribution, expressed in flower buds.

Its subcellular location is the secreted. The protein localises to the cell wall. It catalyses the reaction [(1-&gt;4)-alpha-D-galacturonosyl methyl ester](n) + n H2O = [(1-&gt;4)-alpha-D-galacturonosyl](n) + n methanol + n H(+). Its pathway is glycan metabolism; pectin degradation; 2-dehydro-3-deoxy-D-gluconate from pectin: step 1/5. Its function is as follows. Acts in the modification of cell walls via demethylesterification of cell wall pectin. This chain is Probable pectinesterase 67 (PME67), found in Arabidopsis thaliana (Mouse-ear cress).